The following is a 500-amino-acid chain: Lysine--tRNA ligase (500 aa).

Mg(2+)-binding residues include glutamate 410 and glutamate 417.

It belongs to the class-II aminoacyl-tRNA synthetase family. Homodimer. Mg(2+) is required as a cofactor.

It is found in the cytoplasm. The catalysed reaction is tRNA(Lys) + L-lysine + ATP = L-lysyl-tRNA(Lys) + AMP + diphosphate. In Mycoplasma capricolum subsp. capricolum (strain California kid / ATCC 27343 / NCTC 10154), this protein is Lysine--tRNA ligase.